A 447-amino-acid polypeptide reads, in one-letter code: GTPase Der (447 aa).

EngA-type G domains are found at residues 4 to 165 (KIIT…SIKE) and 180 to 357 (LQIV…KIWN). GTP contacts are provided by residues 10 to 17 (GRPNVGKS), 57 to 61 (DTPGL), 119 to 122 (NKCE), 186 to 193 (GRPNAGKS), 233 to 237 (DTAGL), and 298 to 301 (NKWD). One can recognise a KH-like domain in the interval 358–443 (KKITTGKLNE…PIRFTYVKNK (86 aa)).

It belongs to the TRAFAC class TrmE-Era-EngA-EngB-Septin-like GTPase superfamily. EngA (Der) GTPase family. In terms of assembly, associates with the 50S ribosomal subunit.

Functionally, GTPase that plays an essential role in the late steps of ribosome biogenesis. The polypeptide is GTPase Der (Rickettsia typhi (strain ATCC VR-144 / Wilmington)).